We begin with the raw amino-acid sequence, 669 residues long: Glycine--tRNA ligase beta subunit (669 aa).

Belongs to the class-II aminoacyl-tRNA synthetase family. As to quaternary structure, tetramer of two alpha and two beta subunits.

The protein localises to the cytoplasm. The enzyme catalyses tRNA(Gly) + glycine + ATP = glycyl-tRNA(Gly) + AMP + diphosphate. The polypeptide is Glycine--tRNA ligase beta subunit (Phenylobacterium zucineum (strain HLK1)).